A 378-amino-acid polypeptide reads, in one-letter code: Glutamate 5-kinase (378 aa).

Residue K19 participates in ATP binding. Substrate-binding residues include S59, D146, and N158. ATP is bound at residue 178-179 (TD). Residues 285 to 363 (RGSVTVDPGA…SEFEKLLGYT (79 aa)) form the PUA domain.

Belongs to the glutamate 5-kinase family.

The protein localises to the cytoplasm. The catalysed reaction is L-glutamate + ATP = L-glutamyl 5-phosphate + ADP. The protein operates within amino-acid biosynthesis; L-proline biosynthesis; L-glutamate 5-semialdehyde from L-glutamate: step 1/2. In terms of biological role, catalyzes the transfer of a phosphate group to glutamate to form L-glutamate 5-phosphate. This is Glutamate 5-kinase from Polaromonas naphthalenivorans (strain CJ2).